The chain runs to 138 residues: Basic phospholipase A2 Drk-b1 (138 aa).

The signal sequence occupies residues Met-1–Gly-16. 7 disulfides stabilise this stretch: Cys-42-Cys-131, Cys-44-Cys-60, Cys-59-Cys-111, Cys-65-Cys-138, Cys-66-Cys-104, Cys-73-Cys-97, and Cys-91-Cys-102. The Ca(2+) site is built by Tyr-43, Gly-45, and Gly-47. His-63 is a catalytic residue. Residue Asp-64 participates in Ca(2+) binding. Residue Asp-105 is part of the active site.

Requires Ca(2+) as cofactor. In terms of tissue distribution, expressed by the venom gland.

Its subcellular location is the secreted. It catalyses the reaction a 1,2-diacyl-sn-glycero-3-phosphocholine + H2O = a 1-acyl-sn-glycero-3-phosphocholine + a fatty acid + H(+). In terms of biological role, exhibits high hydrolytic activities and shows strong preference for the anionic micelles (dPPC with deoxycholate) to the zwitterionic micelles (dPPC with Triton X-100). PLA2 catalyzes the calcium-dependent hydrolysis of the 2-acyl groups in 3-sn-phosphoglycerides. This chain is Basic phospholipase A2 Drk-b1, found in Daboia russelii (Russel's viper).